Here is a 109-residue protein sequence, read N- to C-terminus: Mitochondrial pyruvate carrier 1 (109 aa).

Ala2 bears the N-acetylalanine mark. Residues Ala2–Asp20 lie on the Mitochondrial matrix side of the membrane. The helical transmembrane segment at Tyr21–Ile41 threads the bilayer. Over Asn42–Ser52 the chain is Mother cell cytoplasmic. A helical transmembrane segment spans residues Gly53–Tyr71. Lys72 carries the post-translational modification N6-acetyllysine. At Lys72–Ala109 the chain is on the mitochondrial matrix side.

As to quaternary structure, homodimer. Forms heterodimer with MPC2. The heterodimer is the more stable and dominant form.

Its subcellular location is the mitochondrion inner membrane. It catalyses the reaction pyruvate(out) + H(+)(out) = pyruvate(in) + H(+)(in). Functionally, mediates the uptake of pyruvate into mitochondria. This chain is Mitochondrial pyruvate carrier 1 (MPC1), found in Bos taurus (Bovine).